Reading from the N-terminus, the 303-residue chain is METVRIATRKSPLALWQSEHVADRLRQAHPGLHVELVPMSTRGDEVLDRSLAAIGGKGLFLKELELAMLRGEADCAVHSLKDVPMELDPPFALPAMLTRHDPADGFVSNLYASLDALPIGARVGTSSLRRQAQLRALRPDLELLDLRGNVNTRLAKLDNGGYDAIVLAVAGLERLGLGERIVARLQPPQWLPAPAQGAVAVECDGGNARLMALFAPLDDAATRACVEAERAMNRALHGSCHVPVAAIAQWQGDDLHLQGLVGSASDGRAVRAEAVGPANDPEGLGQRVAKLLLDDGAGELLNV.

Cysteine 240 carries the S-(dipyrrolylmethanemethyl)cysteine modification.

The protein belongs to the HMBS family. As to quaternary structure, monomer. The cofactor is dipyrromethane.

The catalysed reaction is 4 porphobilinogen + H2O = hydroxymethylbilane + 4 NH4(+). The protein operates within porphyrin-containing compound metabolism; protoporphyrin-IX biosynthesis; coproporphyrinogen-III from 5-aminolevulinate: step 2/4. Functionally, tetrapolymerization of the monopyrrole PBG into the hydroxymethylbilane pre-uroporphyrinogen in several discrete steps. This is Porphobilinogen deaminase from Stenotrophomonas maltophilia (strain K279a).